We begin with the raw amino-acid sequence, 427 residues long: Stemphyloxin II biosynthesis cluster transcription factor sthR (427 aa).

The zn(2)-C6 fungal-type DNA-binding region spans C15 to C45. The disordered stretch occupies residues K51–S70. Residues H59 to V69 are compositionally biased toward polar residues.

It localises to the nucleus. Functionally, transcription factor that regulates the expression of the gene cluster that mediates the biosynthesis of the phytotoxin stemphyloxin II. This Phaeosphaeria nodorum (strain SN15 / ATCC MYA-4574 / FGSC 10173) (Glume blotch fungus) protein is Stemphyloxin II biosynthesis cluster transcription factor sthR.